Here is a 468-residue protein sequence, read N- to C-terminus: Mannan endo-1,4-beta-mannosidase 3 (468 aa).

The first 23 residues, 1 to 23 (MTVRPRPAAAAIIIAAVFGAAAA), serve as a signal peptide directing secretion. W86 is a binding site for substrate. The N-linked (GlcNAc...) asparagine glycan is linked to N152. N201 contributes to the substrate binding site. E202 serves as the catalytic Proton donor. Substrate is bound at residue Y281. Residue N300 is glycosylated (N-linked (GlcNAc...) asparagine). E321 serves as the catalytic Nucleophile. An N-linked (GlcNAc...) asparagine glycan is attached at N333. Substrate-binding residues include W364 and D371. Residues 415–436 (LRRRRRRPASSHRKTRLGSGGD) form a disordered region. A compositionally biased stretch (basic residues) spans 416-430 (RRRRRRPASSHRKTR).

The protein belongs to the glycosyl hydrolase 5 (cellulase A) family. In terms of tissue distribution, expressed in seeds.

Its subcellular location is the secreted. The enzyme catalyses Random hydrolysis of (1-&gt;4)-beta-D-mannosidic linkages in mannans, galactomannans and glucomannans.. This chain is Mannan endo-1,4-beta-mannosidase 3 (MAN3), found in Oryza sativa subsp. japonica (Rice).